The following is a 141-amino-acid chain: Hemoglobin subunit alpha (141 aa).

Residues 1 to 141 (VLSPADKTNV…VSTVLTSKYR (141 aa)) form the Globin domain. A Phosphoserine modification is found at Ser3. Lys7 is subject to N6-succinyllysine. The residue at position 8 (Thr8) is a Phosphothreonine. Lys11 carries the N6-succinyllysine modification. Lys16 is modified (N6-acetyllysine; alternate). Lys16 bears the N6-succinyllysine; alternate mark. Ser35 carries the phosphoserine modification. Lys40 is modified (N6-succinyllysine). His58 is an O2 binding site. His87 contributes to the heme b binding site. Phosphoserine is present on Ser102. The residue at position 108 (Thr108) is a Phosphothreonine. A phosphoserine mark is found at Ser124 and Ser131. 2 positions are modified to phosphothreonine: Thr134 and Thr137. Position 138 is a phosphoserine (Ser138).

It belongs to the globin family. Heterotetramer of two alpha chains and two beta chains. As to expression, red blood cells.

Functionally, involved in oxygen transport from the lung to the various peripheral tissues. Its function is as follows. Hemopressin acts as an antagonist peptide of the cannabinoid receptor CNR1. Hemopressin-binding efficiently blocks cannabinoid receptor CNR1 and subsequent signaling. In Physeter macrocephalus (Sperm whale), this protein is Hemoglobin subunit alpha (HBA).